We begin with the raw amino-acid sequence, 459 residues long: Bifunctional protein GlmU (459 aa).

The interval 1–230 is pyrophosphorylase; it reads MSNRFAVILA…FDETLGVNDR (230 aa). UDP-N-acetyl-alpha-D-glucosamine contacts are provided by residues 9-12, Lys23, Gln73, and 78-79; these read LAAG and GT. Asp103 is a Mg(2+) binding site. Positions 140, 155, 170, and 228 each coordinate UDP-N-acetyl-alpha-D-glucosamine. A Mg(2+)-binding site is contributed by Asn228. Residues 231–251 are linker; the sequence is VALSQAEIIMKNRINRKNMVN. Positions 252–459 are N-acetyltransferase; that stretch reads GVTIIDPSNT…VDQLLNKKKS (208 aa). Residues Arg333 and Lys351 each coordinate UDP-N-acetyl-alpha-D-glucosamine. His363 (proton acceptor) is an active-site residue. UDP-N-acetyl-alpha-D-glucosamine contacts are provided by Tyr366 and Asn377. Acetyl-CoA is bound by residues 386–387, Ala423, and Arg440; that span reads NY.

It in the N-terminal section; belongs to the N-acetylglucosamine-1-phosphate uridyltransferase family. In the C-terminal section; belongs to the transferase hexapeptide repeat family. Homotrimer. Mg(2+) is required as a cofactor.

It localises to the cytoplasm. It catalyses the reaction alpha-D-glucosamine 1-phosphate + acetyl-CoA = N-acetyl-alpha-D-glucosamine 1-phosphate + CoA + H(+). It carries out the reaction N-acetyl-alpha-D-glucosamine 1-phosphate + UTP + H(+) = UDP-N-acetyl-alpha-D-glucosamine + diphosphate. It functions in the pathway nucleotide-sugar biosynthesis; UDP-N-acetyl-alpha-D-glucosamine biosynthesis; N-acetyl-alpha-D-glucosamine 1-phosphate from alpha-D-glucosamine 6-phosphate (route II): step 2/2. The protein operates within nucleotide-sugar biosynthesis; UDP-N-acetyl-alpha-D-glucosamine biosynthesis; UDP-N-acetyl-alpha-D-glucosamine from N-acetyl-alpha-D-glucosamine 1-phosphate: step 1/1. It participates in bacterial outer membrane biogenesis; LPS lipid A biosynthesis. Its function is as follows. Catalyzes the last two sequential reactions in the de novo biosynthetic pathway for UDP-N-acetylglucosamine (UDP-GlcNAc). The C-terminal domain catalyzes the transfer of acetyl group from acetyl coenzyme A to glucosamine-1-phosphate (GlcN-1-P) to produce N-acetylglucosamine-1-phosphate (GlcNAc-1-P), which is converted into UDP-GlcNAc by the transfer of uridine 5-monophosphate (from uridine 5-triphosphate), a reaction catalyzed by the N-terminal domain. This is Bifunctional protein GlmU from Bacillus cereus (strain ATCC 14579 / DSM 31 / CCUG 7414 / JCM 2152 / NBRC 15305 / NCIMB 9373 / NCTC 2599 / NRRL B-3711).